A 63-amino-acid chain; its full sequence is Large ribosomal subunit protein bL35 (63 aa).

Belongs to the bacterial ribosomal protein bL35 family.

The sequence is that of Large ribosomal subunit protein bL35 from Campylobacter concisus (strain 13826).